A 262-amino-acid polypeptide reads, in one-letter code: ATP synthase subunit a (262 aa).

5 helical membrane-spanning segments follow: residues 26-46 (VHIDTLFFSILAAVIFLFVFS), 86-106 (VAPLALTIFCWVFIMNAIDLI), 130-150 (DISATLGMSICVFFLILFYTI), 204-226 (LIFILIAVMYSANMAIAALGIPL), and 240-260 (LQAFIFMMLTVVYLSIAYNKA).

Belongs to the ATPase A chain family. As to quaternary structure, F-type ATPases have 2 components, CF(1) - the catalytic core - and CF(0) - the membrane proton channel. CF(1) has five subunits: alpha(3), beta(3), gamma(1), delta(1), epsilon(1). CF(0) has three main subunits: a(1), b(2) and c(9-12). The alpha and beta chains form an alternating ring which encloses part of the gamma chain. CF(1) is attached to CF(0) by a central stalk formed by the gamma and epsilon chains, while a peripheral stalk is formed by the delta and b chains.

The protein localises to the cell inner membrane. Its function is as follows. Key component of the proton channel; it plays a direct role in the translocation of protons across the membrane. This chain is ATP synthase subunit a, found in Haemophilus influenzae (strain PittEE).